The following is a 97-amino-acid chain: Nucleoid-associated protein HPAG1_0033 (97 aa).

Belongs to the YbaB/EbfC family. Homodimer.

The protein resides in the cytoplasm. It is found in the nucleoid. Functionally, binds to DNA and alters its conformation. May be involved in regulation of gene expression, nucleoid organization and DNA protection. The sequence is that of Nucleoid-associated protein HPAG1_0033 from Helicobacter pylori (strain HPAG1).